The following is a 185-amino-acid chain: UPF0669 protein C6orf120 homolog (185 aa).

Positions 1 to 23 are cleaved as a signal peptide; it reads MATPWRCALLMILASQVVILVKC. Asn47 carries an N-linked (GlcNAc...) asparagine glycan.

This sequence belongs to the UPF0669 family.

Its subcellular location is the secreted. Its function is as follows. May be involved in induction of apoptosis in CD4(+) T-cells, but not CD8(+) T-cells or hepatocytes. This Rattus norvegicus (Rat) protein is UPF0669 protein C6orf120 homolog.